The chain runs to 258 residues: Pyridoxal phosphate homeostasis protein (258 aa).

Lysine 47 carries the post-translational modification N6-(pyridoxal phosphate)lysine.

The protein belongs to the pyridoxal phosphate-binding protein YggS/PROSC family.

Functionally, pyridoxal 5'-phosphate (PLP)-binding protein, which is involved in PLP homeostasis. The protein is Pyridoxal phosphate homeostasis protein of Mycobacterium bovis (strain ATCC BAA-935 / AF2122/97).